The primary structure comprises 336 residues: Biotin synthase (336 aa).

In terms of domain architecture, Radical SAM core spans 48–277 (VFGDEVEFCS…QAELRLCGGR (230 aa)). Residues Cys66, Cys70, and Cys73 each contribute to the [4Fe-4S] cluster site. [2Fe-2S] cluster contacts are provided by Cys110, Cys142, Cys202, and Arg272.

Belongs to the radical SAM superfamily. Biotin synthase family. In terms of assembly, homodimer. Requires [4Fe-4S] cluster as cofactor. It depends on [2Fe-2S] cluster as a cofactor.

The catalysed reaction is (4R,5S)-dethiobiotin + (sulfur carrier)-SH + 2 reduced [2Fe-2S]-[ferredoxin] + 2 S-adenosyl-L-methionine = (sulfur carrier)-H + biotin + 2 5'-deoxyadenosine + 2 L-methionine + 2 oxidized [2Fe-2S]-[ferredoxin]. The protein operates within cofactor biosynthesis; biotin biosynthesis; biotin from 7,8-diaminononanoate: step 2/2. Its function is as follows. Catalyzes the conversion of dethiobiotin (DTB) to biotin by the insertion of a sulfur atom into dethiobiotin via a radical-based mechanism. The protein is Biotin synthase of Persephonella marina (strain DSM 14350 / EX-H1).